The sequence spans 682 residues: Penicillin-binding protein activator LpoA (682 aa).

An N-terminal signal peptide occupies residues 1–26 (MLSSITVRTKSGRLIPLVLAATLLAA). Cysteine 27 carries N-palmitoyl cysteine lipidation. The S-diacylglycerol cysteine moiety is linked to residue cysteine 27.

It belongs to the LpoA family. As to quaternary structure, interacts with PBP1a.

It localises to the cell outer membrane. In terms of biological role, regulator of peptidoglycan synthesis that is essential for the function of penicillin-binding protein 1A (PBP1a). This Edwardsiella ictaluri (strain 93-146) protein is Penicillin-binding protein activator LpoA.